A 298-amino-acid chain; its full sequence is UDP-3-O-acyl-N-acetylglucosamine deacetylase (298 aa).

H75, H232, and D236 together coordinate Zn(2+). Catalysis depends on H259, which acts as the Proton donor.

The protein belongs to the LpxC family. The cofactor is Zn(2+).

The catalysed reaction is a UDP-3-O-[(3R)-3-hydroxyacyl]-N-acetyl-alpha-D-glucosamine + H2O = a UDP-3-O-[(3R)-3-hydroxyacyl]-alpha-D-glucosamine + acetate. The protein operates within glycolipid biosynthesis; lipid IV(A) biosynthesis; lipid IV(A) from (3R)-3-hydroxytetradecanoyl-[acyl-carrier-protein] and UDP-N-acetyl-alpha-D-glucosamine: step 2/6. Its function is as follows. Catalyzes the hydrolysis of UDP-3-O-myristoyl-N-acetylglucosamine to form UDP-3-O-myristoylglucosamine and acetate, the committed step in lipid A biosynthesis. The chain is UDP-3-O-acyl-N-acetylglucosamine deacetylase from Wolinella succinogenes (strain ATCC 29543 / DSM 1740 / CCUG 13145 / JCM 31913 / LMG 7466 / NCTC 11488 / FDC 602W) (Vibrio succinogenes).